A 1400-amino-acid chain; its full sequence is DNA-directed RNA polymerase subunit beta' (1400 aa).

Residues Cys71, Cys73, Cys86, and Cys89 each contribute to the Zn(2+) site. 3 residues coordinate Mg(2+): Asp462, Asp464, and Asp466. 4 residues coordinate Zn(2+): Cys811, Cys885, Cys892, and Cys895.

This sequence belongs to the RNA polymerase beta' chain family. As to quaternary structure, the RNAP catalytic core consists of 2 alpha, 1 beta, 1 beta' and 1 omega subunit. When a sigma factor is associated with the core the holoenzyme is formed, which can initiate transcription. Requires Mg(2+) as cofactor. It depends on Zn(2+) as a cofactor.

The catalysed reaction is RNA(n) + a ribonucleoside 5'-triphosphate = RNA(n+1) + diphosphate. In terms of biological role, DNA-dependent RNA polymerase catalyzes the transcription of DNA into RNA using the four ribonucleoside triphosphates as substrates. In Brucella melitensis biotype 1 (strain ATCC 23456 / CCUG 17765 / NCTC 10094 / 16M), this protein is DNA-directed RNA polymerase subunit beta'.